The following is a 510-amino-acid chain: ATP synthase subunit alpha, chloroplastic (510 aa).

170-177 (GDRQTGKT) serves as a coordination point for ATP.

Belongs to the ATPase alpha/beta chains family. F-type ATPases have 2 components, CF(1) - the catalytic core - and CF(0) - the membrane proton channel. CF(1) has five subunits: alpha(3), beta(3), gamma(1), delta(1), epsilon(1). CF(0) has four main subunits: a, b, b' and c.

The protein resides in the plastid. The protein localises to the chloroplast thylakoid membrane. The enzyme catalyses ATP + H2O + 4 H(+)(in) = ADP + phosphate + 5 H(+)(out). Produces ATP from ADP in the presence of a proton gradient across the membrane. The alpha chain is a regulatory subunit. In Lotus japonicus (Lotus corniculatus var. japonicus), this protein is ATP synthase subunit alpha, chloroplastic.